The sequence spans 332 residues: Ribosomal RNA small subunit methyltransferase H (332 aa).

S-adenosyl-L-methionine is bound by residues 37–39 (GGY), Asp55, Phe82, Asp103, and Gln110. A disordered region spans residues 281 to 332 (TKRPVTPSDEETAANPRARSAKLRAGERTAAPAQPEAPLPHWPTLASVMGRR).

It belongs to the methyltransferase superfamily. RsmH family.

It localises to the cytoplasm. It carries out the reaction cytidine(1402) in 16S rRNA + S-adenosyl-L-methionine = N(4)-methylcytidine(1402) in 16S rRNA + S-adenosyl-L-homocysteine + H(+). Functionally, specifically methylates the N4 position of cytidine in position 1402 (C1402) of 16S rRNA. The chain is Ribosomal RNA small subunit methyltransferase H from Rhodopseudomonas palustris (strain BisA53).